A 286-amino-acid chain; its full sequence is Bifunctional protein FolD (286 aa).

Residues 164–166 (GRS), S193, and I234 each bind NADP(+).

The protein belongs to the tetrahydrofolate dehydrogenase/cyclohydrolase family. Homodimer.

The catalysed reaction is (6R)-5,10-methylene-5,6,7,8-tetrahydrofolate + NADP(+) = (6R)-5,10-methenyltetrahydrofolate + NADPH. The enzyme catalyses (6R)-5,10-methenyltetrahydrofolate + H2O = (6R)-10-formyltetrahydrofolate + H(+). Its pathway is one-carbon metabolism; tetrahydrofolate interconversion. Catalyzes the oxidation of 5,10-methylenetetrahydrofolate to 5,10-methenyltetrahydrofolate and then the hydrolysis of 5,10-methenyltetrahydrofolate to 10-formyltetrahydrofolate. This is Bifunctional protein FolD from Maridesulfovibrio salexigens (strain ATCC 14822 / DSM 2638 / NCIMB 8403 / VKM B-1763) (Desulfovibrio salexigens).